The sequence spans 289 residues: ATP synthase gamma chain (289 aa).

Belongs to the ATPase gamma chain family. In terms of assembly, F-type ATPases have 2 components, CF(1) - the catalytic core - and CF(0) - the membrane proton channel. CF(1) has five subunits: alpha(3), beta(3), gamma(1), delta(1), epsilon(1). CF(0) has three main subunits: a, b and c.

Its subcellular location is the cell inner membrane. Produces ATP from ADP in the presence of a proton gradient across the membrane. The gamma chain is believed to be important in regulating ATPase activity and the flow of protons through the CF(0) complex. The protein is ATP synthase gamma chain of Azoarcus sp. (strain BH72).